The chain runs to 176 residues: Large ribosomal subunit protein eL20A (176 aa).

This sequence belongs to the eukaryotic ribosomal protein eL20 family. In terms of assembly, component of the large ribosomal subunit (LSU). Mature yeast ribosomes consist of a small (40S) and a large (60S) subunit. The 40S small subunit contains 1 molecule of ribosomal RNA (18S rRNA) and at least 33 different proteins. The large 60S subunit contains 3 rRNA molecules (25S, 5.8S and 5S rRNA) and at least 46 different proteins. eL20 forms multiple interactions with RNA and proteins in the central protuberance, connecting components of core functional centers that are located far apart.

It is found in the cytoplasm. In terms of biological role, component of the ribosome, a large ribonucleoprotein complex responsible for the synthesis of proteins in the cell. The small ribosomal subunit (SSU) binds messenger RNAs (mRNAs) and translates the encoded message by selecting cognate aminoacyl-transfer RNA (tRNA) molecules. The large subunit (LSU) contains the ribosomal catalytic site termed the peptidyl transferase center (PTC), which catalyzes the formation of peptide bonds, thereby polymerizing the amino acids delivered by tRNAs into a polypeptide chain. The nascent polypeptides leave the ribosome through a tunnel in the LSU and interact with protein factors that function in enzymatic processing, targeting, and the membrane insertion of nascent chains at the exit of the ribosomal tunnel. This is Large ribosomal subunit protein eL20A (rpl2001) from Schizosaccharomyces pombe (strain 972 / ATCC 24843) (Fission yeast).